Here is a 211-residue protein sequence, read N- to C-terminus: Protein-L-isoaspartate O-methyltransferase (211 aa).

The active site involves Ser-62.

The protein belongs to the methyltransferase superfamily. L-isoaspartyl/D-aspartyl protein methyltransferase family.

It localises to the cytoplasm. It catalyses the reaction [protein]-L-isoaspartate + S-adenosyl-L-methionine = [protein]-L-isoaspartate alpha-methyl ester + S-adenosyl-L-homocysteine. Functionally, catalyzes the methyl esterification of L-isoaspartyl residues in peptides and proteins that result from spontaneous decomposition of normal L-aspartyl and L-asparaginyl residues. It plays a role in the repair and/or degradation of damaged proteins. The protein is Protein-L-isoaspartate O-methyltransferase of Shewanella halifaxensis (strain HAW-EB4).